The chain runs to 334 residues: Chitinase 9 (334 aa).

The signal sequence occupies residues 1-23 (MKATTTAVALLVAAAAMAAQVVA). Residues 24–64 (EQCGSQAGGALCPNCLCCSSYGWCGSTSDYCGDGCQSQCDG) enclose the Chitin-binding type-1 domain. 8 disulfides stabilise this stretch: cysteine 26-cysteine 41, cysteine 35-cysteine 47, cysteine 38-cysteine 65, cysteine 40-cysteine 54, cysteine 58-cysteine 62, cysteine 107-cysteine 169, cysteine 181-cysteine 189, and cysteine 288-cysteine 320. Catalysis depends on glutamate 151, which acts as the Proton donor.

This sequence belongs to the glycosyl hydrolase 19 family. Chitinase class I subfamily. Expressed at high levels in roots, sheaths and meristems.

It catalyses the reaction Random endo-hydrolysis of N-acetyl-beta-D-glucosaminide (1-&gt;4)-beta-linkages in chitin and chitodextrins.. Its function is as follows. May play a role in defense against fungal pathogens containing chitin. The chain is Chitinase 9 (Cht9) from Oryza sativa subsp. japonica (Rice).